Here is a 388-residue protein sequence, read N- to C-terminus: MKIHEYQGKEILRKFGVAVPRGKPAFSVDEAVKVAEELGGPVWVVKAQIHAGGRGKGGGVKVAKSIEQVREYANQILGMQLVTHQTGPEGQKVNRLMIEEGADIKQELYVSLVVDRISQKIVLMGSSEGGMDIEEVAEKHPELIHKVIVEPSTGLLDAQADDLAAKIGVPAASIPQARAILQGLYKAFWETDASLAEINPLNVSGDGKVIALDAKFNFDSNALFRHPEIVAYRDLDEEDPAEIEASKFDLAYISLDGNIGCLVNGAGLAMATMDTIKLFGGEPANFLDVGGGATTEKVTEAFKLMLKNPDLKAILVNIFGGIMRCDVIAEGVIAGSKAVNLNVPLVVRMKGTNEDLGKKMLADSGLPIISADSMEEAAQKVVAAAAGK.

The 236-residue stretch at 9–244 (KEILRKFGVA…LDEEDPAEIE (236 aa)) folds into the ATP-grasp domain. Residues lysine 46, 53-55 (GRG), glutamate 99, alanine 102, and glutamate 107 contribute to the ATP site. Residues asparagine 199 and aspartate 213 each contribute to the Mg(2+) site. Substrate-binding positions include asparagine 264 and 321–323 (GIM).

It belongs to the succinate/malate CoA ligase beta subunit family. In terms of assembly, heterotetramer of two alpha and two beta subunits. Mg(2+) serves as cofactor.

The catalysed reaction is succinate + ATP + CoA = succinyl-CoA + ADP + phosphate. It catalyses the reaction GTP + succinate + CoA = succinyl-CoA + GDP + phosphate. Its pathway is carbohydrate metabolism; tricarboxylic acid cycle; succinate from succinyl-CoA (ligase route): step 1/1. In terms of biological role, succinyl-CoA synthetase functions in the citric acid cycle (TCA), coupling the hydrolysis of succinyl-CoA to the synthesis of either ATP or GTP and thus represents the only step of substrate-level phosphorylation in the TCA. The beta subunit provides nucleotide specificity of the enzyme and binds the substrate succinate, while the binding sites for coenzyme A and phosphate are found in the alpha subunit. This is Succinate--CoA ligase [ADP-forming] subunit beta from Burkholderia ambifaria (strain MC40-6).